The following is a 583-amino-acid chain: Glycine--tRNA ligase (583 aa).

Positions 100 and 166 each coordinate substrate. Residues 198-200 (RNE), 208-213 (VRLREF), 328-329 (EV), and 443-446 (GTDR) each bind ATP. 213–217 (FTIME) is a binding site for substrate. Residue 439–443 (EPSFG) participates in substrate binding.

The protein belongs to the class-II aminoacyl-tRNA synthetase family.

The protein localises to the cytoplasm. The enzyme catalyses tRNA(Gly) + glycine + ATP = glycyl-tRNA(Gly) + AMP + diphosphate. Catalyzes the attachment of glycine to tRNA(Gly). The protein is Glycine--tRNA ligase of Aeropyrum pernix (strain ATCC 700893 / DSM 11879 / JCM 9820 / NBRC 100138 / K1).